We begin with the raw amino-acid sequence, 365 residues long: 3-isopropylmalate dehydrogenase (365 aa).

78 to 91 (GPKWDTLPAEERPE) contributes to the NAD(+) binding site. Positions 99, 109, 138, and 227 each coordinate substrate. Positions 227, 251, and 255 each coordinate Mg(2+). NAD(+) is bound at residue 285–297 (GSAPDIAGKNIAN).

It belongs to the isocitrate and isopropylmalate dehydrogenases family. LeuB type 1 subfamily. Homodimer. Requires Mg(2+) as cofactor. Mn(2+) serves as cofactor.

It is found in the cytoplasm. It carries out the reaction (2R,3S)-3-isopropylmalate + NAD(+) = 4-methyl-2-oxopentanoate + CO2 + NADH. It functions in the pathway amino-acid biosynthesis; L-leucine biosynthesis; L-leucine from 3-methyl-2-oxobutanoate: step 3/4. Functionally, catalyzes the oxidation of 3-carboxy-2-hydroxy-4-methylpentanoate (3-isopropylmalate) to 3-carboxy-4-methyl-2-oxopentanoate. The product decarboxylates to 4-methyl-2 oxopentanoate. The protein is 3-isopropylmalate dehydrogenase of Syntrophotalea carbinolica (strain DSM 2380 / NBRC 103641 / GraBd1) (Pelobacter carbinolicus).